A 139-amino-acid polypeptide reads, in one-letter code: ATP synthase epsilon chain (139 aa).

Belongs to the ATPase epsilon chain family. In terms of assembly, F-type ATPases have 2 components, CF(1) - the catalytic core - and CF(0) - the membrane proton channel. CF(1) has five subunits: alpha(3), beta(3), gamma(1), delta(1), epsilon(1). CF(0) has three main subunits: a, b and c.

Its subcellular location is the cell inner membrane. In terms of biological role, produces ATP from ADP in the presence of a proton gradient across the membrane. The protein is ATP synthase epsilon chain of Pseudomonas putida (strain W619).